The chain runs to 842 residues: Alanine--tRNA ligase (842 aa).

The Zn(2+) site is built by H549, H553, C650, and H654.

It belongs to the class-II aminoacyl-tRNA synthetase family. Zn(2+) is required as a cofactor.

The protein localises to the cytoplasm. It catalyses the reaction tRNA(Ala) + L-alanine + ATP = L-alanyl-tRNA(Ala) + AMP + diphosphate. Functionally, catalyzes the attachment of alanine to tRNA(Ala) in a two-step reaction: alanine is first activated by ATP to form Ala-AMP and then transferred to the acceptor end of tRNA(Ala). Also edits incorrectly charged Ser-tRNA(Ala) and Gly-tRNA(Ala) via its editing domain. This is Alanine--tRNA ligase from Campylobacter jejuni (strain RM1221).